Reading from the N-terminus, the 744-residue chain is MDEEELDHPNASPEKRYFPESLDSSDGDEEGVLACEDLELNPFDGLPYSSRYYKLLKEREELPIWKEKYSFMESLLQNQVVVVSGDSKCGKSSQVPQWCAEYCLSIHYQHGGVICTQAHKQTAVQLALRVADEMDVNIGHEVGYVIPFENCCTTETILRYCTDDMLQREMMSNPFLGSYGVIILDDVHERSLATDVLLGLLKDVLLARPELKLIVNCSPLLTSKLSSYYGDVPVIEVRNKHPVEVVYLSGAQKDSFESVIRLIFEIHRSGEKGDVVVFLACEQDIEKTYELVCQEGSNLNPDVGDLVVIPLYPKEKCSLFRPVDETEKRCQVYQRRVVLTTSCGESLIWSHTVKFVIDVGLERRQVYNPRIRANSLVLQPISQSQAEIRKQLLGSSPSGKLFCLYTEEFASKDMRPLKPAEMQEANLTSMVLFMKRVDIAGLGRCDFMNRPAPESLMQALEDLDYLAALDNDGNLSEFGIIMSEFPLDPQLSKSILASCEFDCVDEMLTIAAMVTAPSCFLHVPHGAEEAAVTCWKTFLHPEGDHFTLINVYNAYQDTVLNSANEHCVEMWCHDCFLSCSALRMADVIRAELLEIIKRIELPYAEPAFGSKENGLNIKKALLSGYFMQIARDVDGSGNYLMLTHKQVAQLHPLSSYSITKKMPEWVLFHQFSISENNYIRVASAVSPELFMQLVPQYYFSNLPPSESKDILQQAAGHLPTETVNKDQDVCDKCPDATEQRCTIQ.

An N-acetylmethionine modification is found at Met1. Positions 1–28 (MDEEELDHPNASPEKRYFPESLDSSDGD) are disordered. The region spanning 72–270 (MESLLQNQVV…RLIFEIHRSG (199 aa)) is the Helicase ATP-binding domain. 85-92 (GDSKCGKS) is an ATP binding site. The short motif at 185-188 (DDVH) is the DEAH box element. Positions 258-438 (SVIRLIFEIH…SMVLFMKRVD (181 aa)) constitute a Helicase C-terminal domain.

It belongs to the DEAD box helicase family. DEAH subfamily.

It is found in the nucleus. The protein resides in the mitochondrion. The enzyme catalyses ATP + H2O = ADP + phosphate + H(+). This is Putative pre-mRNA-splicing factor ATP-dependent RNA helicase DHX32 (Dhx32) from Mus musculus (Mouse).